Reading from the N-terminus, the 371-residue chain is Leu/Ile/Val-binding protein homolog 1 (371 aa).

A signal peptide spans 1–23 (MRKTLFSGVALAAVIAFGGSAWA).

This sequence belongs to the leucine-binding protein family.

Its function is as follows. Component of an amino-acid transport system. This is Leu/Ile/Val-binding protein homolog 1 from Brucella abortus (strain 2308).